The sequence spans 576 residues: Threonine dehydratase, mitochondrial (576 aa).

Residue Lys-109 is modified to N6-(pyridoxal phosphate)lysine. 2 consecutive ACT-like domains span residues 393-473 (VFML…DISD) and 495-566 (RIIS…DETD).

Belongs to the serine/threonine dehydratase family. In terms of assembly, homotetramer. Pyridoxal 5'-phosphate is required as a cofactor.

It localises to the mitochondrion. It carries out the reaction L-threonine = 2-oxobutanoate + NH4(+). The protein operates within amino-acid biosynthesis; L-isoleucine biosynthesis; 2-oxobutanoate from L-threonine: step 1/1. With respect to regulation, isoleucine allosterically inhibits while valine allosterically activates this enzyme. In Saccharomyces cerevisiae (strain ATCC 204508 / S288c) (Baker's yeast), this protein is Threonine dehydratase, mitochondrial (ILV1).